A 267-amino-acid chain; its full sequence is MTFSPPDLSRVPGVLGRIVTEREADYRNADASLGEARAPHRRFEQALRLSPDDRGARLALIAEVKQASPSEGAIAALDPAQAARAYAEGGAAAISCLTEPRHFGGSPEALRAVVAASEVPVLRKDFVVHPAMLREAAEWGAGAALLMVSVLGERLPEFLAMTEHLGLDALVEVHDERELDIALAAGPRILGINNRDLTTLKIDLGVSPHLMARARAAGFSGVLVAESGYRAPADLREVYGLADAVLVGTSLAGSGDLAGAARALLAR.

Belongs to the TrpC family.

The catalysed reaction is 1-(2-carboxyphenylamino)-1-deoxy-D-ribulose 5-phosphate + H(+) = (1S,2R)-1-C-(indol-3-yl)glycerol 3-phosphate + CO2 + H2O. Its pathway is amino-acid biosynthesis; L-tryptophan biosynthesis; L-tryptophan from chorismate: step 4/5. This is Indole-3-glycerol phosphate synthase from Deinococcus radiodurans (strain ATCC 13939 / DSM 20539 / JCM 16871 / CCUG 27074 / LMG 4051 / NBRC 15346 / NCIMB 9279 / VKM B-1422 / R1).